Reading from the N-terminus, the 334-residue chain is Protein-glutamate methylesterase/protein-glutamine glutaminase 2 (334 aa).

Positions 2–120 constitute a Response regulatory domain; the sequence is NIGIVNDLPL…GAAGDTTKLL (119 aa). A 4-aspartylphosphate modification is found at D53. In terms of domain architecture, CheB-type methylesterase spans 134-334; sequence PGSSRLAGAA…AGELAALARI (201 aa). Active-site residues include S157, H184, and D277.

Belongs to the CheB family. Post-translationally, phosphorylated by CheA. Phosphorylation of the N-terminal regulatory domain activates the methylesterase activity.

Its subcellular location is the cytoplasm. The enzyme catalyses [protein]-L-glutamate 5-O-methyl ester + H2O = L-glutamyl-[protein] + methanol + H(+). It carries out the reaction L-glutaminyl-[protein] + H2O = L-glutamyl-[protein] + NH4(+). In terms of biological role, involved in chemotaxis. Part of a chemotaxis signal transduction system that modulates chemotaxis in response to various stimuli. Catalyzes the demethylation of specific methylglutamate residues introduced into the chemoreceptors (methyl-accepting chemotaxis proteins or MCP) by CheR. Also mediates the irreversible deamidation of specific glutamine residues to glutamic acid. The sequence is that of Protein-glutamate methylesterase/protein-glutamine glutaminase 2 from Burkholderia orbicola (strain AU 1054).